A 449-amino-acid polypeptide reads, in one-letter code: Phosphoglucosamine mutase (449 aa).

The active-site Phosphoserine intermediate is the serine 104. Serine 104, aspartate 243, aspartate 245, and aspartate 247 together coordinate Mg(2+). Position 104 is a phosphoserine (serine 104).

Belongs to the phosphohexose mutase family. Requires Mg(2+) as cofactor. In terms of processing, activated by phosphorylation.

It catalyses the reaction alpha-D-glucosamine 1-phosphate = D-glucosamine 6-phosphate. Functionally, catalyzes the conversion of glucosamine-6-phosphate to glucosamine-1-phosphate. This Xanthomonas campestris pv. campestris (strain 8004) protein is Phosphoglucosamine mutase.